The sequence spans 245 residues: 1-(5-phosphoribosyl)-5-[(5-phosphoribosylamino)methylideneamino] imidazole-4-carboxamide isomerase (245 aa).

Asp-7 (proton acceptor) is an active-site residue. Asp-129 serves as the catalytic Proton donor.

This sequence belongs to the HisA/HisF family.

The protein resides in the cytoplasm. The enzyme catalyses 1-(5-phospho-beta-D-ribosyl)-5-[(5-phospho-beta-D-ribosylamino)methylideneamino]imidazole-4-carboxamide = 5-[(5-phospho-1-deoxy-D-ribulos-1-ylimino)methylamino]-1-(5-phospho-beta-D-ribosyl)imidazole-4-carboxamide. It functions in the pathway amino-acid biosynthesis; L-histidine biosynthesis; L-histidine from 5-phospho-alpha-D-ribose 1-diphosphate: step 4/9. This is 1-(5-phosphoribosyl)-5-[(5-phosphoribosylamino)methylideneamino] imidazole-4-carboxamide isomerase from Alteromonas mediterranea (strain DSM 17117 / CIP 110805 / LMG 28347 / Deep ecotype).